We begin with the raw amino-acid sequence, 301 residues long: Glycine--tRNA ligase alpha subunit (301 aa).

Belongs to the class-II aminoacyl-tRNA synthetase family. In terms of assembly, tetramer of two alpha and two beta subunits.

The protein resides in the cytoplasm. The catalysed reaction is tRNA(Gly) + glycine + ATP = glycyl-tRNA(Gly) + AMP + diphosphate. This Shewanella oneidensis (strain ATCC 700550 / JCM 31522 / CIP 106686 / LMG 19005 / NCIMB 14063 / MR-1) protein is Glycine--tRNA ligase alpha subunit.